Here is a 220-residue protein sequence, read N- to C-terminus: GILT-like protein CBG03282 (220 aa).

A signal peptide spans 1–22 (MTIIRTLFVYYSFLFILVLCSS). N131 is a glycosylation site (N-linked (GlcNAc...) asparagine).

It belongs to the GILT family.

It is found in the secreted. The protein is GILT-like protein CBG03282 of Caenorhabditis briggsae.